The sequence spans 374 residues: Acid phosphatase-like protein XcAP-1 (374 aa).

An N-terminal signal peptide occupies residues Thr-1 to Ala-17. Val-25 is a binding site for serotonin. 3 disulfide bridges follow: Cys-144-Cys-372, Cys-165-Cys-219, and Cys-345-Cys-349. Asp-245, Asp-249, Asn-271, and Gln-283 together coordinate serotonin.

The protein belongs to the histidine acid phosphatase family.

Its subcellular location is the secreted. Its function is as follows. Probably modulates blood feeding of fleas on vertebrate species by binding and sequestering different mediators involved in the host response. Binds biogenic amines: serotonin, adrenaline and noradrenaline. Binds leukotriene C4. Does not bind histamine, leukotriene B4, leukotriene D4, leukotriene E4, ADP, and stable analogs of thromboxane A2: U-46619 and cTXA2. This chain is Acid phosphatase-like protein XcAP-1, found in Xenopsylla cheopis (Oriental rat flea).